We begin with the raw amino-acid sequence, 452 residues long: Probable ECA polymerase (452 aa).

11 consecutive transmembrane segments (helical) span residues 6 to 26, 37 to 57, 63 to 83, 118 to 138, 155 to 175, 181 to 201, 207 to 227, 228 to 248, 341 to 361, 378 to 398, and 410 to 430; these read FSGL…LTWF, VFFS…TSVL, VGVA…CFYG, VILM…NGFL, GVAL…VYFL, AWLF…MIVG, IIIA…ISLW, MLAA…LKRY, LVVM…GLII, YKAA…IVLA, and VFFL…FWLF.

Belongs to the WzyE family. As to quaternary structure, probably part of a complex composed of WzxE, WzyE and WzzE.

It is found in the cell inner membrane. Its pathway is bacterial outer membrane biogenesis; enterobacterial common antigen biosynthesis. Functionally, probably involved in the polymerization of enterobacterial common antigen (ECA) trisaccharide repeat units. The polypeptide is Probable ECA polymerase (Salmonella arizonae (strain ATCC BAA-731 / CDC346-86 / RSK2980)).